Consider the following 275-residue polypeptide: NH(3)-dependent NAD(+) synthetase (275 aa).

46 to 53 (GISGGQDS) serves as a coordination point for ATP. A Mg(2+)-binding site is contributed by Asp-52. Residue Arg-141 coordinates deamido-NAD(+). Thr-161 is an ATP binding site. Glu-166 is a binding site for Mg(2+). The deamido-NAD(+) site is built by Lys-174 and Asp-181. Residues Lys-190 and Thr-212 each coordinate ATP. 261 to 262 (HK) serves as a coordination point for deamido-NAD(+).

This sequence belongs to the NAD synthetase family. Homodimer.

The catalysed reaction is deamido-NAD(+) + NH4(+) + ATP = AMP + diphosphate + NAD(+) + H(+). It participates in cofactor biosynthesis; NAD(+) biosynthesis; NAD(+) from deamido-NAD(+) (ammonia route): step 1/1. Catalyzes the ATP-dependent amidation of deamido-NAD to form NAD. Uses ammonia as a nitrogen source. This is NH(3)-dependent NAD(+) synthetase from Limosilactobacillus reuteri (strain DSM 20016) (Lactobacillus reuteri).